Reading from the N-terminus, the 293-residue chain is Small ribosomal subunit biogenesis GTPase RsgA 2 (293 aa).

The CP-type G domain maps to 63–223; sequence SNELVRPPIA…VADTPGFSVL (161 aa). GTP is bound by residues 112 to 115 and 166 to 174; these read TKVD and GQSGVGKSS. The Zn(2+) site is built by C247, C252, H254, and C260.

This sequence belongs to the TRAFAC class YlqF/YawG GTPase family. RsgA subfamily. As to quaternary structure, monomer. Associates with 30S ribosomal subunit, binds 16S rRNA. Requires Zn(2+) as cofactor.

It is found in the cytoplasm. Functionally, one of several proteins that assist in the late maturation steps of the functional core of the 30S ribosomal subunit. Helps release RbfA from mature subunits. May play a role in the assembly of ribosomal proteins into the subunit. Circularly permuted GTPase that catalyzes slow GTP hydrolysis, GTPase activity is stimulated by the 30S ribosomal subunit. The chain is Small ribosomal subunit biogenesis GTPase RsgA 2 from Oceanobacillus iheyensis (strain DSM 14371 / CIP 107618 / JCM 11309 / KCTC 3954 / HTE831).